Consider the following 200-residue polypeptide: Large ribosomal subunit protein bL25 (200 aa).

This sequence belongs to the bacterial ribosomal protein bL25 family. CTC subfamily. As to quaternary structure, part of the 50S ribosomal subunit; part of the 5S rRNA/L5/L18/L25 subcomplex. Contacts the 5S rRNA. Binds to the 5S rRNA independently of L5 and L18.

Functionally, this is one of the proteins that binds to the 5S RNA in the ribosome where it forms part of the central protuberance. The sequence is that of Large ribosomal subunit protein bL25 from Corynebacterium glutamicum (strain ATCC 13032 / DSM 20300 / JCM 1318 / BCRC 11384 / CCUG 27702 / LMG 3730 / NBRC 12168 / NCIMB 10025 / NRRL B-2784 / 534).